Reading from the N-terminus, the 543-residue chain is 2,3-bisphosphoglycerate-independent phosphoglycerate mutase (543 aa).

Asp20 and Ser73 together coordinate Mn(2+). The active-site Phosphoserine intermediate is the Ser73. Substrate is bound by residues His134, 166–167 (RD), Arg198, Arg204, 278–281 (RGDR), and Lys360. Mn(2+) is bound by residues Asp428, His432, Asp469, His470, and His488.

It belongs to the BPG-independent phosphoglycerate mutase family. In terms of assembly, monomer. It depends on Mn(2+) as a cofactor.

It carries out the reaction (2R)-2-phosphoglycerate = (2R)-3-phosphoglycerate. The protein operates within carbohydrate degradation; glycolysis; pyruvate from D-glyceraldehyde 3-phosphate: step 3/5. Its function is as follows. Catalyzes the interconversion of 2-phosphoglycerate and 3-phosphoglycerate. This Rhodopirellula baltica (strain DSM 10527 / NCIMB 13988 / SH1) protein is 2,3-bisphosphoglycerate-independent phosphoglycerate mutase.